The sequence spans 214 residues: Vascular endothelial growth factor A (214 aa).

The first 26 residues, 1 to 26 (MNFLLSWVHWTLALLLYLHHAKWSQA), serve as a signal peptide directing secretion. 3 cysteine pairs are disulfide-bonded: cysteine 51/cysteine 93, cysteine 82/cysteine 127, and cysteine 86/cysteine 129. Asparagine 100 carries N-linked (GlcNAc...) asparagine glycosylation. The segment covering 131–142 (PKKDRTKPEKKS) has biased composition (basic and acidic residues). A disordered region spans residues 131–159 (PKKDRTKPEKKSVRGKGKGQKRKRKKSRF). Residues 143-159 (VRGKGKGQKRKRKKSRF) show a composition bias toward basic residues.

It belongs to the PDGF/VEGF growth factor family. In terms of assembly, homodimer; disulfide-linked. Also found as heterodimer with PGF. Interacts with NRP1. Interacts with isoform 2 of BSG. Interacts with CD82; this interaction inhibits VEGFA-mediated signaling pathway. Expressed in the pituitary, in brain, in particularly in supraoptic and paraventricular nuclei and the choroid plexus. Also found abundantly in the corpus luteum of the ovary and in kidney glomeruli. Expressed in the ductal epithelial cells of post-pubertal mammary glands. Expressed in the ductal and alveolar epithelial cells throughout the whole period of gestational evolution, lactation and involution.

Its subcellular location is the secreted. In terms of biological role, growth factor active in angiogenesis, vasculogenesis and endothelial cell growth. Induces endothelial cell proliferation, promotes cell migration, inhibits apoptosis and induces permeabilization of blood vessels. Binds to the FLT1/VEGFR1 and KDR/VEGFR2 receptors, heparan sulfate and heparin. May play a role in increasing vascular permeability during lactation, when increased transport of molecules from the blood is required for efficient milk protein synthesis. Binding to NRP1 receptor initiates a signaling pathway needed for motor neuron axon guidance and cell body migration, including for the caudal migration of facial motor neurons from rhombomere 4 to rhombomere 6 during embryonic development. Also binds the DEAR/FBXW7-AS1 receptor. This is Vascular endothelial growth factor A (Vegfa) from Rattus norvegicus (Rat).